The primary structure comprises 552 residues: Urocanate hydratase (552 aa).

Residues 49–50 (GG), glutamine 127, 173–175 (GMG), glutamate 193, arginine 198, 239–240 (NA), 260–264 (QTSAH), 270–271 (YI), and tyrosine 319 contribute to the NAD(+) site. Cysteine 407 is an active-site residue. Glycine 489 provides a ligand contact to NAD(+).

The protein belongs to the urocanase family. NAD(+) is required as a cofactor.

The protein localises to the cytoplasm. The catalysed reaction is 4-imidazolone-5-propanoate = trans-urocanate + H2O. Its pathway is amino-acid degradation; L-histidine degradation into L-glutamate; N-formimidoyl-L-glutamate from L-histidine: step 2/3. Catalyzes the conversion of urocanate to 4-imidazolone-5-propionate. The sequence is that of Urocanate hydratase from Geobacillus sp. (strain WCH70).